The sequence spans 84 residues: Tripartite terminase subunit 2 (84 aa).

This sequence belongs to the herpesviridae TRM2 protein family. In terms of assembly, associates with TRM1 and TRM3 to form the tripartite terminase complex.

It localises to the host nucleus. In terms of biological role, component of the molecular motor that translocates viral genomic DNA in empty capsid during DNA packaging. Forms a tripartite terminase complex together with TRM1 and TRM3 in the host cytoplasm. Once the complex reaches the host nucleus, it interacts with the capsid portal vertex. This portal forms a ring in which genomic DNA is translocated into the capsid. This chain is Tripartite terminase subunit 2, found in Alcelaphine herpesvirus 1 (strain C500) (AlHV-1).